A 302-amino-acid chain; its full sequence is Digeranylgeranylglyceryl phosphate synthase (302 aa).

8 consecutive transmembrane segments (helical) span residues 21–41 (LVVA…IYGG), 43–63 (IVSS…AGGY), 103–123 (IGLI…FAVL), 144–164 (IVIA…ASCM), 167–187 (GKVV…LLVL), 218–238 (AYMA…FPYI), 244–264 (MAYL…LAIL), and 282–302 (ARSA…AGLM).

The protein belongs to the UbiA prenyltransferase family. DGGGP synthase subfamily. It depends on Mg(2+) as a cofactor.

Its subcellular location is the cell membrane. It catalyses the reaction sn-3-O-(geranylgeranyl)glycerol 1-phosphate + (2E,6E,10E)-geranylgeranyl diphosphate = 2,3-bis-O-(geranylgeranyl)-sn-glycerol 1-phosphate + diphosphate. It participates in membrane lipid metabolism; glycerophospholipid metabolism. Prenyltransferase that catalyzes the transfer of the geranylgeranyl moiety of geranylgeranyl diphosphate (GGPP) to the C2 hydroxyl of (S)-3-O-geranylgeranylglyceryl phosphate (GGGP). This reaction is the second ether-bond-formation step in the biosynthesis of archaeal membrane lipids. In Hyperthermus butylicus (strain DSM 5456 / JCM 9403 / PLM1-5), this protein is Digeranylgeranylglyceryl phosphate synthase.